Reading from the N-terminus, the 340-residue chain is tRNA N6-adenosine threonylcarbamoyltransferase (340 aa).

Residues His111 and His115 each coordinate Fe cation. Substrate is bound by residues Leu134–Gly138, Asp167, Gly180, and Asn276. Residue Asp304 coordinates Fe cation.

Belongs to the KAE1 / TsaD family. Fe(2+) serves as cofactor.

The protein resides in the cytoplasm. It catalyses the reaction L-threonylcarbamoyladenylate + adenosine(37) in tRNA = N(6)-L-threonylcarbamoyladenosine(37) in tRNA + AMP + H(+). Required for the formation of a threonylcarbamoyl group on adenosine at position 37 (t(6)A37) in tRNAs that read codons beginning with adenine. Is involved in the transfer of the threonylcarbamoyl moiety of threonylcarbamoyl-AMP (TC-AMP) to the N6 group of A37, together with TsaE and TsaB. TsaD likely plays a direct catalytic role in this reaction. In Helicobacter pylori (strain J99 / ATCC 700824) (Campylobacter pylori J99), this protein is tRNA N6-adenosine threonylcarbamoyltransferase.